The following is a 195-amino-acid chain: Peptidyl-tRNA hydrolase (195 aa).

Tyrosine 17 contributes to the tRNA binding site. The Proton acceptor role is filled by histidine 22. Phenylalanine 68, asparagine 70, and asparagine 116 together coordinate tRNA.

Belongs to the PTH family. As to quaternary structure, monomer.

The protein localises to the cytoplasm. It catalyses the reaction an N-acyl-L-alpha-aminoacyl-tRNA + H2O = an N-acyl-L-amino acid + a tRNA + H(+). Hydrolyzes ribosome-free peptidyl-tRNAs (with 1 or more amino acids incorporated), which drop off the ribosome during protein synthesis, or as a result of ribosome stalling. Functionally, catalyzes the release of premature peptidyl moieties from peptidyl-tRNA molecules trapped in stalled 50S ribosomal subunits, and thus maintains levels of free tRNAs and 50S ribosomes. The chain is Peptidyl-tRNA hydrolase from Shewanella amazonensis (strain ATCC BAA-1098 / SB2B).